Here is a 386-residue protein sequence, read N- to C-terminus: Large ribosomal subunit protein uL4 (386 aa).

The segment covering 341 to 357 (VEQRRLKEKQAKLDQKR) has biased composition (basic and acidic residues). Residues 341–386 (VEQRRLKEKQAKLDQKRGIATPVEGAGKGRPRKTTAKPTKAKAGKK) are disordered. Positions 369 to 386 (GRPRKTTAKPTKAKAGKK) are enriched in basic residues.

The protein belongs to the universal ribosomal protein uL4 family.

The chain is Large ribosomal subunit protein uL4 (RPL4) from Urechis caupo (Innkeeper worm).